The sequence spans 314 residues: MKVLGIECTAHTFGVGIFDSEKGVLANEKVTYKGYGIHPREAAELHLKEFDKVLLKALEKANISLKDIDLIAVSSGPGLLPTLKLGNYIAVYLGKKLNKPVIGVNHIVAHNEFARYLAKAKDPLFVYVSGANTQFLAIVNNSWFLVGETLDMGVGNLIDKVARDLGLEFPGGPKIEELAKKGKNLIELPYTIKGLNLQLGGIYTYIKRIKDQYSKEDIAYSLQEWVFALILEIAERAMHMLDKKELILTGGVACNNRLNDMAEQMAKENNFKFYRLPCQYLTDNGAMIAYLGYYWYSQGIYYEPKPRPYWRIWI.

3 residues coordinate Fe cation: H106, H110, and Y127. Residues 127–131, D159, G172, E176, and N255 each bind substrate; that span reads YVSGA. D283 is a binding site for Fe cation.

This sequence belongs to the KAE1 / TsaD family. Fe(2+) serves as cofactor.

The protein resides in the cytoplasm. It carries out the reaction L-threonylcarbamoyladenylate + adenosine(37) in tRNA = N(6)-L-threonylcarbamoyladenosine(37) in tRNA + AMP + H(+). Required for the formation of a threonylcarbamoyl group on adenosine at position 37 (t(6)A37) in tRNAs that read codons beginning with adenine. Is probably involved in the transfer of the threonylcarbamoyl moiety of threonylcarbamoyl-AMP (TC-AMP) to the N6 group of A37. The protein is tRNA N6-adenosine threonylcarbamoyltransferase of Nanoarchaeum equitans (strain Kin4-M).